A 145-amino-acid chain; its full sequence is uncharacterized protein (145 aa).

Positions 37–123 are disordered; that stretch reads GKGTNTAKSS…MDREASYFAP (87 aa). A compositionally biased stretch (polar residues) spans 38-63; the sequence is KGTNTAKSSGGNNGTNLNAKRSNTTQ.

This is an uncharacterized protein from Caenorhabditis elegans.